The sequence spans 409 residues: NADH-quinone oxidoreductase subunit D (409 aa).

The protein belongs to the complex I 49 kDa subunit family. NDH-1 is composed of 14 different subunits. Subunits NuoB, C, D, E, F, and G constitute the peripheral sector of the complex.

The protein resides in the cell inner membrane. It catalyses the reaction a quinone + NADH + 5 H(+)(in) = a quinol + NAD(+) + 4 H(+)(out). In terms of biological role, NDH-1 shuttles electrons from NADH, via FMN and iron-sulfur (Fe-S) centers, to quinones in the respiratory chain. The immediate electron acceptor for the enzyme in this species is believed to be ubiquinone. Couples the redox reaction to proton translocation (for every two electrons transferred, four hydrogen ions are translocated across the cytoplasmic membrane), and thus conserves the redox energy in a proton gradient. The polypeptide is NADH-quinone oxidoreductase subunit D (Helicobacter pylori (strain Shi470)).